A 236-amino-acid polypeptide reads, in one-letter code: Small ribosomal subunit protein uS5 (236 aa).

The S5 DRBM domain occupies 61–124 (ENQEILDIAL…NYAKLNIIEI (64 aa)).

The protein belongs to the universal ribosomal protein uS5 family. As to quaternary structure, part of the 30S ribosomal subunit. Contacts protein S4.

Its function is as follows. With S4 and S12 plays an important role in translational accuracy. The polypeptide is Small ribosomal subunit protein uS5 (Pyrococcus abyssi (strain GE5 / Orsay)).